The chain runs to 273 residues: Exosome complex component MTR3 (273 aa).

The tract at residues 1 to 36 (MPGDHRRIRGPEESQPPQLYAAEDDETPAARDPTRL) is disordered.

The protein belongs to the RNase PH family. Component of the RNA exosome core complex (Exo-9), composed of EXOSC1, EXOSC2, EXOSC3, EXOSC4, EXOSC5, EXOSC6, EXOSC7, EXOSC8 and EXOSC9; within the complex interacts with EXOSC1, EXOSC7 and EXOSC8. The catalytically inactive RNA exosome core complex (Exo-9) associates with the catalytic subunit EXOSC10/RRP6. Exo-9 may associate with DIS3 to form the nucleolar exosome complex, or DIS3L to form the cytoplasmic exosome complex. Exo-9 is formed by a hexameric base ring consisting of the heterodimers EXOSC4-EXOSC9, EXOSC5-EXOSC8 and EXOSC6-EXOSC7, and a cap ring consisting of EXOSC1, EXOSC2 and EXOSC3. The RNA exosome complex associates with cofactors EXOSC10/RRP6, C1D/RRP47, MPHOSPH6/MPP6 and MTREX/MTR4.

It localises to the cytoplasm. It is found in the nucleus. Its subcellular location is the nucleolus. Non-catalytic component of the RNA exosome complex which has 3'-&gt;5' exoribonuclease activity and participates in a multitude of cellular RNA processing and degradation events. In the nucleus, the RNA exosome complex is involved in proper maturation of stable RNA species such as rRNA, snRNA and snoRNA, in the elimination of RNA processing by-products and non-coding 'pervasive' transcripts, such as antisense RNA species and promoter-upstream transcripts (PROMPTs), and of mRNAs with processing defects, thereby limiting or excluding their export to the cytoplasm. The RNA exosome may be involved in Ig class switch recombination (CSR) and/or Ig variable region somatic hypermutation (SHM) by targeting AICDA deamination activity to transcribed dsDNA substrates. In the cytoplasm, the RNA exosome complex is involved in general mRNA turnover and specifically degrades inherently unstable mRNAs containing AU-rich elements (AREs) within their 3' untranslated regions, and in RNA surveillance pathways, preventing translation of aberrant mRNAs. It seems to be involved in degradation of histone mRNA. The catalytic inactive RNA exosome core complex of 9 subunits (Exo-9) is proposed to play a pivotal role in the binding and presentation of RNA for ribonucleolysis, and to serve as a scaffold for the association with catalytic subunits and accessory proteins or complexes. In Mus musculus (Mouse), this protein is Exosome complex component MTR3 (Exosc6).